We begin with the raw amino-acid sequence, 136 residues long: Glutamyl-tRNA(Gln) amidotransferase subunit C, mitochondrial (136 aa).

The protein belongs to the GatC family. In terms of assembly, subunit of the heterotrimeric GatCAB amidotransferase (AdT) complex, composed of A (QRSL1), B (GATB) and C (GATC) subunits.

It is found in the mitochondrion. It catalyses the reaction L-glutamyl-tRNA(Gln) + L-glutamine + ATP + H2O = L-glutaminyl-tRNA(Gln) + L-glutamate + ADP + phosphate + H(+). In terms of biological role, allows the formation of correctly charged Gln-tRNA(Gln) through the transamidation of misacylated Glu-tRNA(Gln) in the mitochondria. The reaction takes place in the presence of glutamine and ATP through an activated gamma-phospho-Glu-tRNA(Gln). This Homo sapiens (Human) protein is Glutamyl-tRNA(Gln) amidotransferase subunit C, mitochondrial.